The following is a 510-amino-acid chain: Inositol-3-phosphate synthase (510 aa).

NAD(+)-binding residues include G70, G71, N72, N73, D143, I180, Q190, R193, T230, A231, N232, T233, G281, S282, D306, S309, N340, N341, D342, K355, G393, D394, D422, and S423.

The protein belongs to the myo-inositol 1-phosphate synthase family. The cofactor is NAD(+).

It is found in the cytoplasm. The protein resides in the cytosol. It localises to the nucleus. The enzyme catalyses D-glucose 6-phosphate = 1D-myo-inositol 3-phosphate. It participates in polyol metabolism; myo-inositol biosynthesis; myo-inositol from D-glucose 6-phosphate: step 1/2. Its function is as follows. Key enzyme in myo-inositol biosynthesis pathway that catalyzes the conversion of glucose 6-phosphate to 1-myo-inositol 1-phosphate in a NAD-dependent manner. The chain is Inositol-3-phosphate synthase from Zea mays (Maize).